Consider the following 343-residue polypeptide: Armadillo repeat-containing protein 10 (343 aa).

Residues 5–27 (RGAGWVAAGLLLGAGACYCIYRL) form a helical membrane-spanning segment. The segment at 43 to 83 (SKSAGALEEGTSEGQLCGRSARPQTGGTWESQWSKTSQPED) is disordered. Serine 45 carries the post-translational modification Phosphoserine. The residue at position 50 (glutamate 50) is a Phosphothreonine. The segment covering 64–82 (RPQTGGTWESQWSKTSQPE) has biased composition (polar residues). Phosphothreonine is present on threonine 85. The ARM repeat unit spans residues 138–180 (GGIPIVANKINHSNQSIKEKALNALNNLSVNVENQIKIKIYIS).

Interacts with the DNA-binding domain of p53/TP53. In terms of tissue distribution, expressed in all tissues tested with higher expression in placenta, liver, kidney, heart and brain.

It localises to the endoplasmic reticulum membrane. It is found in the mitochondrion outer membrane. Functionally, may play a role in cell survival and cell growth. May suppress the transcriptional activity of p53/TP53. The sequence is that of Armadillo repeat-containing protein 10 (ARMC10) from Homo sapiens (Human).